Here is a 466-residue protein sequence, read N- to C-terminus: Zinc finger protein ZIC 3 (466 aa).

Residues 65–80 (DLSSGQSSAFTPQGSG) show a composition bias toward polar residues. The disordered stretch occupies residues 65 to 103 (DLSSGQSSAFTPQGSGYANALGHHHHHHHHHHASQVPTY). Residues 86–97 (GHHHHHHHHHHA) show a composition bias toward basic residues. Lys-247 is covalently cross-linked (Glycyl lysine isopeptide (Lys-Gly) (interchain with G-Cter in SUMO2)). A C2H2-type 1; atypical zinc finger spans residues 250-285 (LSCKWIEEAQLSRPKKSCDRTFSTMHELVTHVTMEH). A C2H2-type 2; atypical zinc finger spans residues 294–321 (HVCYWEECPREGKSFKAKYKLVNHIRVH). Short sequence motifs (nuclear localization signal) lie at residues 296 to 321 (CYWE…IRVH) and 329 to 351 (CPFP…KRTH). 3 consecutive C2H2-type zinc fingers follow at residues 327–351 (FPCP…KRTH), 357–381 (FKCE…MHVH), and 387–409 (YICK…MKVH). Residues 403–466 (RKHMKVHESQ…LPPNFNEWYV (64 aa)) are disordered. Low complexity predominate over residues 411–427 (SQGSDSSPAASSGYESS). The segment covering 434 to 454 (SANSKDTTKTPSAVQTSTSHN) has biased composition (polar residues).

This sequence belongs to the GLI C2H2-type zinc-finger protein family. Interacts with KPNA1 and KPNA6. Interacts (via C2H2-type domains 3, 4 and 5) with GLI3; the interaction enhances its transcriptional activity. Interacts (via the C2H2-type domains 3, 4 and 5) with MDFIC (via the C2H2-type domains 3, 4 and 5); the interaction reduces its transcriptional activity. CNS. A high level expression is seen in the cerebellum.

It localises to the nucleus. It is found in the cytoplasm. Acts as a transcriptional activator. Required in the earliest stages in both axial midline development and left-right (LR) asymmetry specification. Binds to the minimal GLI-consensus sequence 5'-GGGTGGTC-3'. The sequence is that of Zinc finger protein ZIC 3 (Zic3) from Mus musculus (Mouse).